Here is a 203-residue protein sequence, read N- to C-terminus: Glycerol-3-phosphate acyltransferase (203 aa).

Helical transmembrane passes span 4–24 (MAVT…AVLI), 80–100 (PVLL…PLFF), 117–137 (PIGL…AILF), and 139–159 (YSSL…WMIK).

The protein belongs to the PlsY family. Probably interacts with PlsX.

Its subcellular location is the cell inner membrane. It carries out the reaction an acyl phosphate + sn-glycerol 3-phosphate = a 1-acyl-sn-glycero-3-phosphate + phosphate. The protein operates within lipid metabolism; phospholipid metabolism. In terms of biological role, catalyzes the transfer of an acyl group from acyl-phosphate (acyl-PO(4)) to glycerol-3-phosphate (G3P) to form lysophosphatidic acid (LPA). This enzyme utilizes acyl-phosphate as fatty acyl donor, but not acyl-CoA or acyl-ACP. This is Glycerol-3-phosphate acyltransferase from Vibrio vulnificus (strain YJ016).